The primary structure comprises 692 residues: Elongation factor G (692 aa).

The tr-type G domain maps to 8–282 (ENTRNIGIMA…AVIDYLPSPV (275 aa)). GTP contacts are provided by residues 17–24 (AHIDAGKT), 81–85 (DTPGH), and 135–138 (NKMD).

The protein belongs to the TRAFAC class translation factor GTPase superfamily. Classic translation factor GTPase family. EF-G/EF-2 subfamily.

The protein resides in the cytoplasm. Functionally, catalyzes the GTP-dependent ribosomal translocation step during translation elongation. During this step, the ribosome changes from the pre-translocational (PRE) to the post-translocational (POST) state as the newly formed A-site-bound peptidyl-tRNA and P-site-bound deacylated tRNA move to the P and E sites, respectively. Catalyzes the coordinated movement of the two tRNA molecules, the mRNA and conformational changes in the ribosome. The sequence is that of Elongation factor G from Lysinibacillus sphaericus (strain C3-41).